Reading from the N-terminus, the 168-residue chain is uncharacterized protein (168 aa).

The segment covering 1-15 has biased composition (low complexity); sequence MKRIISSSKSLKQLS. Residues 1 to 107 are disordered; the sequence is MKRIISSSKS…NNNNNNNNNN (107 aa). Over residues 33–47 the composition is skewed to acidic residues; sequence SDSDSDSDSDSDSDS. Low complexity predominate over residues 48–107; it reads DSNSNSNSNSNSNSNSNSNSNSNSNSNNNNNNTNNNNNNNNNNNNNNNNNNNNNNNNNNN.

This is an uncharacterized protein from Dictyostelium discoideum (Social amoeba).